The primary structure comprises 272 residues: Replication-associated protein A (272 aa).

Residues 11 to 114 (LHRTANTFLT…PLALFERGTF (104 aa)) form the CRESS-DNA virus Rep endonuclease domain. The short motif at 18-21 (FLTY) is the RCR-1 element. A divalent metal cation-binding residues include Glu-52, His-60, and His-62. The short motif at 60–62 (HLH) is the RCR-2 element. Tyr-100 (for DNA cleavage activity) is an active-site residue. The RCR-3 motif lies at 100–103 (YILK). Glu-104 contributes to the a divalent metal cation binding site. Residues 175–187 (SANKLFPDIQEEF) are oligomerization. The binding to RBR1 stretch occupies residues 198–202 (LLCNE). The transactivation stretch occupies residues 221–230 (MLLQPNCYTV). Residues 250–265 (DQESRASTSSVQQGQE) show a composition bias toward polar residues. Residues 250–272 (DQESRASTSSVQQGQENLLGPEA) form a disordered region.

The protein belongs to the geminiviridae Rep protein family. Homooligomer. Interacts with host retinoblastoma-related protein 1 (RBR1), and may thereby deregulate the host cell cycle. Part of the C- and V-complexes which are RepA-Rep-DNA complexes involved in the c-sense and v-sense transcription. Requires Mg(2+) as cofactor. The cofactor is Mn(2+).

It localises to the host nucleus. It is found in the host cytoplasm. In terms of biological role, implicated in enhancement of V-sense gene expression. Acts a an inhibitor of C-sense gene transcription. The sequence is that of Replication-associated protein A from Avena sativa (Oat).